A 245-amino-acid polypeptide reads, in one-letter code: Flavin-dependent thymidylate synthase (245 aa).

Residues 6-220 (PRVELLAHTP…PELFAHAGAK (215 aa)) form the ThyX domain. FAD-binding positions include S65, 89–91 (RHR), and Q97. DUMP is bound by residues 86-89 (QLVR), 97-101 (QQSQR), and R159. The ThyX motif signature appears at 89-99 (RHRIASFSQQS). FAD is bound by residues 175-177 (NCR) and H181. R186 lines the dUMP pocket. Residue R186 is the Involved in ionization of N3 of dUMP, leading to its activation of the active site.

Belongs to the thymidylate synthase ThyX family. In terms of assembly, homotetramer. Requires FAD as cofactor.

It catalyses the reaction dUMP + (6R)-5,10-methylene-5,6,7,8-tetrahydrofolate + NADPH + H(+) = dTMP + (6S)-5,6,7,8-tetrahydrofolate + NADP(+). The protein operates within pyrimidine metabolism; dTTP biosynthesis. Catalyzes the reductive methylation of 2'-deoxyuridine-5'-monophosphate (dUMP) to 2'-deoxythymidine-5'-monophosphate (dTMP) while utilizing 5,10-methylenetetrahydrofolate (mTHF) as the methyl donor, and NADPH and FADH(2) as the reductant. This chain is Flavin-dependent thymidylate synthase, found in Nitratidesulfovibrio vulgaris (strain ATCC 29579 / DSM 644 / CCUG 34227 / NCIMB 8303 / VKM B-1760 / Hildenborough) (Desulfovibrio vulgaris).